The chain runs to 77 residues: Metallocarboxypeptidase inhibitor (77 aa).

An N-terminal signal peptide occupies residues 1–32; it reads MAQKFTILFTILLVVIAAQDVMAQDATLTKLF. A Pyrrolidone carboxylic acid modification is found at glutamine 33. Cystine bridges form between cysteine 39-cysteine 55, cysteine 43-cysteine 58, and cysteine 49-cysteine 65. The propeptide at 70–77 is hydrophobic peptide; the sequence is GRAMAIGV.

This sequence to potato MCPI. In terms of tissue distribution, ovaries.

May play a defensive role against insect attacks. The chain is Metallocarboxypeptidase inhibitor from Solanum lycopersicum (Tomato).